We begin with the raw amino-acid sequence, 141 residues long: Plasmatocyte-spreading peptide (141 aa).

The N-terminal stretch at 1–22 is a signal peptide; it reads MKLTINILFCLILISQYNSANG. A propeptide spanning residues 23 to 118 is cleaved from the precursor; it reads NLRDLFNNVR…ATGGKDDKGR (96 aa). Over residues 46-58 the composition is skewed to basic and acidic residues; that stretch reads VKTLFHPSDKSGN. The interval 46–118 is disordered; it reads VKTLFHPSDK…ATGGKDDKGR (73 aa). Residues 83-98 show a composition bias toward low complexity; that stretch reads PVAVTPAPVVSTTTQA. The segment covering 99–108 has biased composition (polar residues); sequence SAPTVATNGT. An intrachain disulfide couples Cys-125 to Cys-137.

The protein belongs to the GBP/PSP1/paralytic peptide family.

In terms of biological role, mediates the spreading of plasmatocytes to foreign surfaces. Plasmocytes are a class of hemocytes involved in insect cellular immunity. This chain is Plasmatocyte-spreading peptide (PSP1), found in Chrysodeixis includens (Soybean looper).